Reading from the N-terminus, the 338-residue chain is tRNA (cytidine(56)-2'-O)-methyltransferase (338 aa).

S-adenosyl-L-methionine is bound by residues Leu79 and 105 to 109 (GSEKV). One can recognise an HD domain in the interval 188-295 (LINHVKSVKE…VAHADNLFAG (108 aa)).

The protein belongs to the aTrm56 family. In terms of assembly, homodimer.

The protein resides in the cytoplasm. It carries out the reaction cytidine(56) in tRNA + S-adenosyl-L-methionine = 2'-O-methylcytidine(56) in tRNA + S-adenosyl-L-homocysteine + H(+). Specifically catalyzes the AdoMet-dependent 2'-O-ribose methylation of cytidine at position 56 in tRNAs. The polypeptide is tRNA (cytidine(56)-2'-O)-methyltransferase (Thermoplasma volcanium (strain ATCC 51530 / DSM 4299 / JCM 9571 / NBRC 15438 / GSS1)).